Consider the following 401-residue polypeptide: Decapping and exoribonuclease protein (401 aa).

Positions 1 to 27 are disordered; the sequence is MEGNKSMQREKIDRPMKRGPEQNSLSP. Positions 7 to 20 are enriched in basic and acidic residues; it reads MQREKIDRPMKRGP. Substrate is bound by residues arginine 69, glutamate 114, and 149–151; that span reads WRG. A Mg(2+)-binding site is contributed by glutamate 210. Positions 235 and 252 each coordinate substrate. Mg(2+) is bound by residues glutamate 252, aspartate 254, glutamate 271, and leucine 272. Substrate is bound by residues lysine 273 and glutamine 298.

The protein belongs to the DXO/Dom3Z family. It depends on Mg(2+) as a cofactor.

The protein resides in the nucleus. The enzyme catalyses a 5'-end triphospho-ribonucleoside in mRNA + H2O = a 5'-end phospho-ribonucleoside in mRNA + diphosphate + H(+). It carries out the reaction a 5'-end NAD(+)-phospho-ribonucleoside in mRNA + H2O = a 5'-end phospho-ribonucleoside in mRNA + NAD(+) + H(+). The catalysed reaction is a 5'-end NAD(+)-phospho-ribonucleoside in snoRNA + H2O = a 5'-end phospho-ribonucleoside in snoRNA + NAD(+) + H(+). It catalyses the reaction a 5'-end (N(7)-methyl 5'-triphosphoguanosine)-ribonucleoside-ribonucleotide in mRNA + H2O = a (N(7)-methyl 5'-triphosphoguanosine)-nucleoside + a 5'-end phospho-ribonucleoside in mRNA + H(+). The enzyme catalyses a 5'-end FAD-phospho-ribonucleoside in mRNA + H2O = a 5'-end phospho-ribonucleoside in mRNA + FAD + H(+). It carries out the reaction a 5'-end CoA-ribonucleoside in mRNA + H2O = 3'-dephospho-CoA + a 5'-end phospho-ribonucleoside in mRNA + H(+). Functionally, decapping enzyme for NAD-capped RNAs: specifically hydrolyzes the nicotinamide adenine dinucleotide (NAD) cap from a subset of RNAs by removing the entire NAD moiety from the 5'-end of an NAD-capped RNA. The NAD-cap is present at the 5'-end of some RNAs and snoRNAs. In contrast to the canonical 5'-end N7 methylguanosine (m7G) cap, the NAD cap promotes mRNA decay. Also acts as a non-canonical decapping enzyme that removes the entire cap structure of m7G capped or incompletely capped RNAs and mediates their subsequent degradation. Specifically degrades pre-mRNAs with a defective 5'-end m7G cap and is part of a pre-mRNA capping quality control. Has decapping activity toward incomplete 5'-end m7G cap mRNAs such as unmethylated 5'-end-capped RNA (cap0), while it has no activity toward 2'-O-ribose methylated m7G cap (cap1). Also has 5'-3' exoribonuclease activities: The 5'-end monophosphate RNA is then degraded by the 5'-3' exoribonuclease activity, enabling this enzyme to decap and degrade incompletely capped mRNAs. Also possesses RNA 5'-pyrophosphohydrolase activity by hydrolyzing the 5'-end triphosphate to release pyrophosphates. Exhibits decapping activity towards FAD-capped RNAs. Exhibits decapping activity towards dpCoA-capped RNAs in vitro. This chain is Decapping and exoribonuclease protein, found in Xenopus laevis (African clawed frog).